A 705-amino-acid chain; its full sequence is Fatty acid oxidation complex subunit alpha (705 aa).

Residues 1-188 (MGKTFNLTRR…KMGLVNDVVP (188 aa)) are enoyl-CoA hydratase. Residues 308-705 (RKVKKAVILG…AMAAEKARFF (398 aa)) form a 3-hydroxyacyl-CoA dehydrogenase region.

It in the N-terminal section; belongs to the enoyl-CoA hydratase/isomerase family. The protein in the central section; belongs to the 3-hydroxyacyl-CoA dehydrogenase family. In terms of assembly, heterotetramer of two alpha chains (FadJ) and two beta chains (FadI).

Its subcellular location is the cytoplasm. It carries out the reaction a (3S)-3-hydroxyacyl-CoA = a (2E)-enoyl-CoA + H2O. The enzyme catalyses a 4-saturated-(3S)-3-hydroxyacyl-CoA = a (3E)-enoyl-CoA + H2O. The catalysed reaction is a (3S)-3-hydroxyacyl-CoA + NAD(+) = a 3-oxoacyl-CoA + NADH + H(+). It catalyses the reaction (3S)-3-hydroxybutanoyl-CoA = (3R)-3-hydroxybutanoyl-CoA. Its pathway is lipid metabolism; fatty acid beta-oxidation. Its function is as follows. Catalyzes the formation of a hydroxyacyl-CoA by addition of water on enoyl-CoA. Also exhibits 3-hydroxyacyl-CoA epimerase and 3-hydroxyacyl-CoA dehydrogenase activities. The polypeptide is Fatty acid oxidation complex subunit alpha (Shewanella oneidensis (strain ATCC 700550 / JCM 31522 / CIP 106686 / LMG 19005 / NCIMB 14063 / MR-1)).